The following is a 734-amino-acid chain: Photosystem I P700 chlorophyll a apoprotein A2 (734 aa).

Helical transmembrane passes span 46–69, 135–158, 175–199, 273–291, 330–353, 369–395, 417–439, and 517–535; these read IFAS…FHVA, LYNG…LHLQ, LNHH…HVAI, IAHH…GHMY, IHFQ…QHMY, AALY…IFFI, AIIS…LYVH, and FLVH…LILV. [4Fe-4S] cluster is bound by residues C559 and C568. A run of 2 helical transmembrane segments spans residues 575 to 596 and 643 to 665; these read AFYL…YWHW and LSVW…MFLI. Chlorophyll a-binding residues include H654, M662, and Y670. Residue W671 coordinates phylloquinone. A helical membrane pass occupies residues 707–727; that stretch reads LVGLAHFSVGYIFTYAAFLIA.

This sequence belongs to the PsaA/PsaB family. The PsaA/B heterodimer binds the P700 chlorophyll special pair and subsequent electron acceptors. PSI consists of a core antenna complex that captures photons, and an electron transfer chain that converts photonic excitation into a charge separation. The eukaryotic PSI reaction center is composed of at least 11 subunits. P700 is a chlorophyll a/chlorophyll a' dimer, A0 is one or more chlorophyll a, A1 is one or both phylloquinones and FX is a shared 4Fe-4S iron-sulfur center. is required as a cofactor.

It localises to the plastid. The protein resides in the chloroplast thylakoid membrane. It carries out the reaction reduced [plastocyanin] + hnu + oxidized [2Fe-2S]-[ferredoxin] = oxidized [plastocyanin] + reduced [2Fe-2S]-[ferredoxin]. PsaA and PsaB bind P700, the primary electron donor of photosystem I (PSI), as well as the electron acceptors A0, A1 and FX. PSI is a plastocyanin-ferredoxin oxidoreductase, converting photonic excitation into a charge separation, which transfers an electron from the donor P700 chlorophyll pair to the spectroscopically characterized acceptors A0, A1, FX, FA and FB in turn. Oxidized P700 is reduced on the lumenal side of the thylakoid membrane by plastocyanin. The polypeptide is Photosystem I P700 chlorophyll a apoprotein A2 (Morus indica (Mulberry)).